The following is a 467-amino-acid chain: MTLKSNKNEPALILDSVTSVRTALSDLYLEQLLQNKPTDKQAAMQTYENKGAEVFSNGSAGHINGAELSRMREVAFEKNQSEPLGVTLKLNDKQRCSVARILHGGMIHRQGSLHEGDEIAEINGKSVANQTVDQLQKILKETNGVVTMKIIPRPQSRSKPCEMYMRGQFDYDPAMDDLIPCKEAGLKFQTGDIIQIINKQDPNWWQGRVENNAANFAGLIPSPELQEWRAASKSKAREGSQSCSPFGKKKKCKDKYLAKHSSIFDQLDVISYEEVVRLPAFKRKTLVLIGAPGVGRRHIKNVLLTKYPEKFSYPVPHTTRPQRKGDANGEEYFFISNEAMTKCISANELLEYGSFQGYMFGTITETIQKIHEQDKIALLDVEPQTMKVLRTADFGPLMVFIAPTDTAAQTENLQMIQKESETILNTYRQYFDVVLVNNDVNESVKIVEEALEHATTTPQWVPVSWVY.

A PDZ domain is found at glutamate 73–proline 154. The 71-residue stretch at proline 160–alanine 230 folds into the SH3 domain. In terms of domain architecture, Guanylate kinase-like spans arginine 283–glutamate 452.

The protein belongs to the MAGUK family. Post-translationally, extensively palmitoylated.

The protein resides in the membrane. In terms of biological role, may play a role in the regulation of neutrophil polarization. The chain is 55 kDa erythrocyte membrane protein (mpp1) from Takifugu rubripes (Japanese pufferfish).